A 497-amino-acid polypeptide reads, in one-letter code: Beta-glucosidase 8 (497 aa).

A signal peptide spans 1–22; that stretch reads MKHFNLLSIILVIVLATSYIDA. Gln42 contributes to the a beta-D-glucoside binding site. Asn65 is a glycosylation site (N-linked (GlcNAc...) asparagine). A beta-D-glucoside contacts are provided by residues His139 and 184-185; that span reads NE. Catalysis depends on Glu185, which acts as the Proton donor. N-linked (GlcNAc...) asparagine glycosylation is present at Asn202. Tyr319 provides a ligand contact to a beta-D-glucoside. The N-linked (GlcNAc...) asparagine glycan is linked to Asn354. A beta-D-glucoside contacts are provided by Glu387, Trp430, and Phe446. The Nucleophile role is filled by Glu387. Residues Asn452, Asn474, and Asn490 are each glycosylated (N-linked (GlcNAc...) asparagine).

The protein belongs to the glycosyl hydrolase 1 family.

It catalyses the reaction Hydrolysis of terminal, non-reducing beta-D-glucosyl residues with release of beta-D-glucose.. In Arabidopsis thaliana (Mouse-ear cress), this protein is Beta-glucosidase 8.